Here is a 288-residue protein sequence, read N- to C-terminus: 4-hydroxybenzoate octaprenyltransferase (288 aa).

6 consecutive transmembrane segments (helical) span residues 33–53 (LWALWVASPGVPPLWILAVFV), 99–119 (LFIVLVLLSFLLVLTLNTMTI), 163–183 (ESLPLSCWLMFLANILWAVAY), 213–233 (LIIGILQVAVLALMGAVGWLN), 234–254 (GLGWEYYWSLFVAAGLFGWQQ), and 268–288 (AFMNNNYVGLVLFLGLAMSYL).

It belongs to the UbiA prenyltransferase family. The cofactor is Mg(2+).

The protein localises to the cell inner membrane. The catalysed reaction is all-trans-octaprenyl diphosphate + 4-hydroxybenzoate = 4-hydroxy-3-(all-trans-octaprenyl)benzoate + diphosphate. The protein operates within cofactor biosynthesis; ubiquinone biosynthesis. Its function is as follows. Catalyzes the prenylation of para-hydroxybenzoate (PHB) with an all-trans polyprenyl group. Mediates the second step in the final reaction sequence of ubiquinone-8 (UQ-8) biosynthesis, which is the condensation of the polyisoprenoid side chain with PHB, generating the first membrane-bound Q intermediate 3-octaprenyl-4-hydroxybenzoate. In Klebsiella pneumoniae subsp. pneumoniae (strain ATCC 700721 / MGH 78578), this protein is 4-hydroxybenzoate octaprenyltransferase.